The sequence spans 138 residues: Small ribosomal subunit protein uS17 (138 aa).

2 stretches are compositionally biased toward basic and acidic residues: residues 1–18 (MSEE…RAEA) and 43–55 (AFDR…QKDT). The tract at residues 1–62 (MSEEERNRGA…KDTRRGRRKE (62 aa)) is disordered.

It belongs to the universal ribosomal protein uS17 family. Part of the 30S ribosomal subunit.

Its function is as follows. One of the primary rRNA binding proteins, it binds specifically to the 5'-end of 16S ribosomal RNA. The polypeptide is Small ribosomal subunit protein uS17 (Rubrobacter xylanophilus (strain DSM 9941 / JCM 11954 / NBRC 16129 / PRD-1)).